We begin with the raw amino-acid sequence, 63 residues long: Large ribosomal subunit protein bL32 (63 aa).

Positions 1-18 (MPVPKRKTSPSRRGKRRS) are enriched in basic residues. A disordered region spans residues 1–26 (MPVPKRKTSPSRRGKRRSHDGLRPEN).

It belongs to the bacterial ribosomal protein bL32 family.

This Neorickettsia sennetsu (strain ATCC VR-367 / Miyayama) (Ehrlichia sennetsu) protein is Large ribosomal subunit protein bL32.